The sequence spans 93 residues: YcgL domain-containing protein Spea_2443 (93 aa).

The 85-residue stretch at 1–85 folds into the YcgL domain; the sequence is MICAVYKSLR…PVVNLLEQHK (85 aa).

The protein is YcgL domain-containing protein Spea_2443 of Shewanella pealeana (strain ATCC 700345 / ANG-SQ1).